The primary structure comprises 463 residues: Quinolone resistance protein NorB (463 aa).

The next 14 membrane-spanning stretches (helical) occupy residues 17–37, 53–73, 86–106, 107–127, 142–162, 165–185, 201–221, 230–250, 273–293, 299–319, 334–354, 357–377, 403–423, and 435–455; these read IGIV…VNVV, IAVS…GGLA, IILN…LLLI, IGRL…LSII, YWSI…GAVA, LGWR…LFLI, FDIK…ILIT, SLLF…FIVL, TASN…NTFV, YSSL…LIMI, PMLI…LTFL, ILYV…LGIY, MASA…YAIV, and IALW…LLLV.

This sequence belongs to the major facilitator superfamily. TCR/Tet family.

It is found in the cell membrane. Functionally, multidrug efflux pump that acts independently of NorA and is one of the factors that confers resistance against diverse quinolones and chemical compounds. Can facilitate bacterial survival in vivo when overexpressed in an abscess and may contribute to the relative resistance of staphylococcal abscesses to antimicrobial therapy. The protein is Quinolone resistance protein NorB (norB) of Staphylococcus aureus (strain MW2).